The primary structure comprises 153 residues: MGFKGVGTYEIVPYQAPSLNLNAWEGKLEPGAVVRTYTRGDKPSDNAKWQVALVAGSGDSAEYLIINVHSGYFLTATKENHIVSTPQISPTDPSARWTIKPATTHQYEVFTINNKVSELGQLTVKDYSTHSGADVLSASAKTADNQKWYFDAK.

Beta-D-galactosyl-(1-&gt;3)-N-acetyl-D-galactosamine contacts are provided by residues 22 to 25 (NAWE) and Asn46. The 96-residue stretch at 58–153 (GDSAEYLIIN…DNQKWYFDAK (96 aa)) folds into the Ricin B-type lectin domain.

Homodimer.

Lectin that primarily recognizes glycans with a non-reducing terminal N-acetylgalactosamine (GalNAc), with a preference for the alpha- over the beta-anomer. Can also bind non-reducing terminal galactose (Gal) residues but with a lower affinity. Strongly interacts with glycolipid type glycans with terminal non-reducing Gal or GalNAc but fails to bind sialylated or fucosylated forms of the same glycans. Strongly interacts with galactosylated N-glycans, displaying highest affinity for alpha-1-3 branched mono-antennary N-glycans but also binding to multi-antennary glycans. The chain is Agglutinin from Sclerotinia sclerotiorum (strain ATCC 18683 / 1980 / Ss-1) (White mold).